The following is a 96-amino-acid chain: UPF0235 protein Tola_0962 (96 aa).

It belongs to the UPF0235 family.

In Tolumonas auensis (strain DSM 9187 / NBRC 110442 / TA 4), this protein is UPF0235 protein Tola_0962.